A 269-amino-acid chain; its full sequence is Hydroxyethylthiazole kinase (269 aa).

Residue Met-46 coordinates substrate. ATP contacts are provided by Arg-122 and Thr-168. Gly-195 is a substrate binding site.

The protein belongs to the Thz kinase family. Mg(2+) is required as a cofactor.

The enzyme catalyses 5-(2-hydroxyethyl)-4-methylthiazole + ATP = 4-methyl-5-(2-phosphooxyethyl)-thiazole + ADP + H(+). It functions in the pathway cofactor biosynthesis; thiamine diphosphate biosynthesis; 4-methyl-5-(2-phosphoethyl)-thiazole from 5-(2-hydroxyethyl)-4-methylthiazole: step 1/1. Its function is as follows. Catalyzes the phosphorylation of the hydroxyl group of 4-methyl-5-beta-hydroxyethylthiazole (THZ). The sequence is that of Hydroxyethylthiazole kinase from Chloroflexus aurantiacus (strain ATCC 29366 / DSM 635 / J-10-fl).